The sequence spans 418 residues: MHIFDELKERGLIFQTTDEEALRQELEEGQVSYYTGYDPTADSLHLGHLVAILTSRRLQLAGHKPYALVGGATGLIGDPSFKDAERSLQTKETVEGWVKSIQGQLAGLLDFENGQNKAEMVNNYDWFSDISFIDFLRDVGKYFTVNYMMSKESVKKRIETGISYTEFAYQIMQGYDFFILNQKHGVTLQIGGSDQWGNMTAGTELLRRKADKTGHVITVPLITDASGKKFGKSEGNAVWLNADKTSPYEMYQFWMNVMDDDAVRFLKIFTFLSLDEIEEIRKQFEAAPHERLAQKILAREVVTLVHGEKAYQEALNITEQLFAGNIKNLSVKELKQGLRGVPNYQVQAEDNLNIVDLLVTAGVVNSKRQAREDVQNGAIYVNGDRIQDLDYTLSDADKLENELTVIRRGKKKYFVLTY.

Tyr-34 provides a ligand contact to L-tyrosine. Residues Pro-39–His-48 carry the 'HIGH' region motif. Positions 169 and 173 each coordinate L-tyrosine. The short motif at Lys-229–Ser-233 is the 'KMSKS' region element. Lys-232 lines the ATP pocket. Positions Leu-352–Tyr-418 constitute an S4 RNA-binding domain.

Belongs to the class-I aminoacyl-tRNA synthetase family. TyrS type 1 subfamily. Homodimer.

The protein localises to the cytoplasm. It carries out the reaction tRNA(Tyr) + L-tyrosine + ATP = L-tyrosyl-tRNA(Tyr) + AMP + diphosphate + H(+). In terms of biological role, catalyzes the attachment of tyrosine to tRNA(Tyr) in a two-step reaction: tyrosine is first activated by ATP to form Tyr-AMP and then transferred to the acceptor end of tRNA(Tyr). The chain is Tyrosine--tRNA ligase from Streptococcus gordonii (strain Challis / ATCC 35105 / BCRC 15272 / CH1 / DL1 / V288).